Reading from the N-terminus, the 111-residue chain is UPF0060 membrane protein NFA_36830 (111 aa).

4 helical membrane passes run 7–27 (LVLF…VWQG), 33–53 (GLWW…VATF), 62–82 (VLAA…VLVD), and 91–111 (LLGA…PRGG).

Belongs to the UPF0060 family.

Its subcellular location is the cell membrane. The chain is UPF0060 membrane protein NFA_36830 from Nocardia farcinica (strain IFM 10152).